Reading from the N-terminus, the 300-residue chain is N-acetylmannosamine kinase (300 aa).

ATP-binding positions include A5–K12 and G132–L139. Zn(2+) is bound by residues H156, C166, C168, and C173.

The protein belongs to the ROK (NagC/XylR) family. NanK subfamily. Homodimer.

The enzyme catalyses an N-acyl-D-mannosamine + ATP = an N-acyl-D-mannosamine 6-phosphate + ADP + H(+). The protein operates within amino-sugar metabolism; N-acetylneuraminate degradation; D-fructose 6-phosphate from N-acetylneuraminate: step 2/5. In terms of biological role, catalyzes the phosphorylation of N-acetylmannosamine (ManNAc) to ManNAc-6-P. This chain is N-acetylmannosamine kinase, found in Haemophilus influenzae (strain 86-028NP).